The following is a 185-amino-acid chain: Elongation factor P (185 aa).

The protein belongs to the elongation factor P family.

The protein localises to the cytoplasm. It participates in protein biosynthesis; polypeptide chain elongation. Its function is as follows. Involved in peptide bond synthesis. Stimulates efficient translation and peptide-bond synthesis on native or reconstituted 70S ribosomes in vitro. Probably functions indirectly by altering the affinity of the ribosome for aminoacyl-tRNA, thus increasing their reactivity as acceptors for peptidyl transferase. The sequence is that of Elongation factor P (efp) from Nostoc sp. (strain PCC 7120 / SAG 25.82 / UTEX 2576).